A 153-amino-acid polypeptide reads, in one-letter code: 6,7-dimethyl-8-ribityllumazine synthase (153 aa).

5-amino-6-(D-ribitylamino)uracil-binding positions include phenylalanine 22, 56–58, and 80–82; these read AFE and TVI. Residue 85 to 86 coordinates (2S)-2-hydroxy-3-oxobutyl phosphate; sequence AT. Catalysis depends on histidine 88, which acts as the Proton donor. Phenylalanine 113 provides a ligand contact to 5-amino-6-(D-ribitylamino)uracil. Residue arginine 127 coordinates (2S)-2-hydroxy-3-oxobutyl phosphate.

This sequence belongs to the DMRL synthase family.

It catalyses the reaction (2S)-2-hydroxy-3-oxobutyl phosphate + 5-amino-6-(D-ribitylamino)uracil = 6,7-dimethyl-8-(1-D-ribityl)lumazine + phosphate + 2 H2O + H(+). The protein operates within cofactor biosynthesis; riboflavin biosynthesis; riboflavin from 2-hydroxy-3-oxobutyl phosphate and 5-amino-6-(D-ribitylamino)uracil: step 1/2. Functionally, catalyzes the formation of 6,7-dimethyl-8-ribityllumazine by condensation of 5-amino-6-(D-ribitylamino)uracil with 3,4-dihydroxy-2-butanone 4-phosphate. This is the penultimate step in the biosynthesis of riboflavin. The sequence is that of 6,7-dimethyl-8-ribityllumazine synthase from Clostridium perfringens (strain ATCC 13124 / DSM 756 / JCM 1290 / NCIMB 6125 / NCTC 8237 / Type A).